Here is a 98-residue protein sequence, read N- to C-terminus: Large ribosomal subunit protein eL21 (98 aa).

The interval 1–22 (MVQMSEGFRRKTRKKLSKHPRE) is disordered. Residues 10–21 (RKTRKKLSKHPR) show a composition bias toward basic residues.

The protein belongs to the eukaryotic ribosomal protein eL21 family.

This chain is Large ribosomal subunit protein eL21 (rpl21e), found in Methanocaldococcus jannaschii (strain ATCC 43067 / DSM 2661 / JAL-1 / JCM 10045 / NBRC 100440) (Methanococcus jannaschii).